We begin with the raw amino-acid sequence, 483 residues long: MKILFTASEAWPLVKTGGLGDVAHGLTHALRERRHDVRLLLPAHPDAVAGLEGRIRRHALTLDQRPFTLIEGRLPGTRVTTWLLDDPPLFARAGNPYTTEDGDPWPDNARRYHRLSRVAAALAAGELLPWQAAVLHAHDWQTALAPFLLQRRPVPRPATVFTIHNLAYRGLFPAETHTRLGLPPEAWTPEGLEFHGRLAFIKGGLAYADAITTVSPTYAREIQTPAFGCGLDGLLRHRSGVLHGIVNGIDTTVWNPAADPHLAACYRKPDPAARAANRAALAQRIGLDGDTGERSGPLLGFVGRLVEQKGVDLILAALPRLLAGGARLALLGSGERELEEALRQAARHYPGRVGVHIGYDEGLAHLIEGGCDLFLMPSRFEPCGLNQLYSLRYGTPPVVTATGGLADTVMDVDTDPTAGNGFHLPAANAGALAATVERATAHWRRPAAWKRIQARGMGGDYSWDASAEAYLRLYRNTPGNNGS.

Lysine 15 lines the ADP-alpha-D-glucose pocket.

This sequence belongs to the glycosyltransferase 1 family. Bacterial/plant glycogen synthase subfamily.

The catalysed reaction is [(1-&gt;4)-alpha-D-glucosyl](n) + ADP-alpha-D-glucose = [(1-&gt;4)-alpha-D-glucosyl](n+1) + ADP + H(+). It functions in the pathway glycan biosynthesis; glycogen biosynthesis. Its function is as follows. Synthesizes alpha-1,4-glucan chains using ADP-glucose. The polypeptide is Glycogen synthase (Alkalilimnicola ehrlichii (strain ATCC BAA-1101 / DSM 17681 / MLHE-1)).